A 201-amino-acid polypeptide reads, in one-letter code: 3-isopropylmalate dehydratase small subunit (201 aa).

It belongs to the LeuD family. LeuD type 1 subfamily. As to quaternary structure, heterodimer of LeuC and LeuD.

It catalyses the reaction (2R,3S)-3-isopropylmalate = (2S)-2-isopropylmalate. It functions in the pathway amino-acid biosynthesis; L-leucine biosynthesis; L-leucine from 3-methyl-2-oxobutanoate: step 2/4. Functionally, catalyzes the isomerization between 2-isopropylmalate and 3-isopropylmalate, via the formation of 2-isopropylmaleate. This Shigella boydii serotype 18 (strain CDC 3083-94 / BS512) protein is 3-isopropylmalate dehydratase small subunit.